The chain runs to 261 residues: Type III pantothenate kinase (261 aa).

6–13 lines the ATP pocket; it reads DVGNTNAK. 108–111 contributes to the substrate binding site; sequence GADR. Aspartate 110 (proton acceptor) is an active-site residue. An ATP-binding site is contributed by threonine 134. Threonine 188 serves as a coordination point for substrate.

This sequence belongs to the type III pantothenate kinase family. Homodimer. The cofactor is NH4(+). K(+) serves as cofactor.

The protein localises to the cytoplasm. It catalyses the reaction (R)-pantothenate + ATP = (R)-4'-phosphopantothenate + ADP + H(+). It functions in the pathway cofactor biosynthesis; coenzyme A biosynthesis; CoA from (R)-pantothenate: step 1/5. Catalyzes the phosphorylation of pantothenate (Pan), the first step in CoA biosynthesis. In Sphingopyxis alaskensis (strain DSM 13593 / LMG 18877 / RB2256) (Sphingomonas alaskensis), this protein is Type III pantothenate kinase.